The chain runs to 897 residues: Alpha-actinin-2 (897 aa).

Residues 1–257 form an actin-binding region; the sequence is MNSMNQIETN…IMTYVSCFYH (257 aa). 2 consecutive Calponin-homology (CH) domains span residues 41-145 and 154-260; these read KQQR…LRFA and TSAK…HAFA. Spectrin repeat units follow at residues 284 to 394, 404 to 509, 519 to 630, and 640 to 743; these read RLME…WLLN, HLAE…ALER, QLHL…SLQE, and RLRR…EVET. EF-hand domains follow at residues 756–791 and 792–827; these read EQMN…MGYD and LGEA…ETAD. Ca(2+) is bound by residues aspartate 769, asparagine 773, aspartate 780, aspartate 805, asparagine 807, and threonine 811.

Belongs to the alpha-actinin family. Homodimer; antiparallel. Post-translationally, ubiquitinated by FBXL22, leading to proteasomal degradation.

It localises to the cytoplasm. Its subcellular location is the myofibril. The protein localises to the sarcomere. The protein resides in the z line. Functionally, F-actin cross-linking protein which is thought to anchor actin to a variety of intracellular structures. This is a bundling protein. This is Alpha-actinin-2 (ACTN2) from Gallus gallus (Chicken).